The sequence spans 321 residues: Endochitinase 33 (321 aa).

An N-terminal signal peptide occupies residues M1–A19. The GH18 domain maps to Q27–R321. Residue E167 is the Proton donor of the active site.

This sequence belongs to the glycosyl hydrolase 18 family. Chitinase class III subfamily. Monomer.

It is found in the secreted. The catalysed reaction is Random endo-hydrolysis of N-acetyl-beta-D-glucosaminide (1-&gt;4)-beta-linkages in chitin and chitodextrins.. Secreted chitinase involved in the degradation of chitin, a component of the cell walls of fungi and exoskeletal elements of some animals (including worms and arthropods). Plays a morphogenetic role during apical growth, cell division and differentiation (cell wall morphogenesis). May be involved in the degradation and further assimilation of phytopathogenic fungi, namely mycoparasitism, the major mechanism accounting for the antagonistic activity against phytopathogenic fungi displayed by Trichoderma. In Trichoderma harzianum (Hypocrea lixii), this protein is Endochitinase 33 (chit33).